The following is a 292-amino-acid chain: 6-phospho-5-dehydro-2-deoxy-D-gluconate aldolase (292 aa).

Asp85 acts as the Proton donor in catalysis. Residues His86 and His180 each contribute to the Zn(2+) site. Gly181 contacts dihydroxyacetone phosphate. His208 serves as a coordination point for Zn(2+). Dihydroxyacetone phosphate is bound by residues 209-211 (GAS) and 230-233 (NINT). Thr233 is modified (phosphothreonine).

This sequence belongs to the class II fructose-bisphosphate aldolase family. IolJ subfamily. Zn(2+) is required as a cofactor.

It catalyses the reaction 6-phospho-5-dehydro-2-deoxy-D-gluconate = 3-oxopropanoate + dihydroxyacetone phosphate. Its pathway is polyol metabolism; myo-inositol degradation into acetyl-CoA; acetyl-CoA from myo-inositol: step 6/7. Its function is as follows. Produces dihydroxyacetone phosphate (DHAP or glycerone phosphate) and malonic semialdehyde (MSA or 3-oxopropanoate) from 6-phospho-5-dehydro-2-deoxy-D-gluconate (DKGP). The sequence is that of 6-phospho-5-dehydro-2-deoxy-D-gluconate aldolase (iolJ) from Bacillus licheniformis (strain ATCC 14580 / DSM 13 / JCM 2505 / CCUG 7422 / NBRC 12200 / NCIMB 9375 / NCTC 10341 / NRRL NRS-1264 / Gibson 46).